Reading from the N-terminus, the 422-residue chain is Probable metallocarboxypeptidase A (422 aa).

A signal peptide spans 1 to 17 (MRSVLSLALLAANVVTA). Positions 18 to 112 (AVVAPFDYSG…FEAYSAGYAP (95 aa)) are cleaved as a propeptide — activation peptide. The 301-residue stretch at 119–419 (SYHSYQDHLS…AGTVAMLKAV (301 aa)) folds into the Peptidase M14 domain. 2 residues coordinate Zn(2+): histidine 179 and glutamate 182. Residues 179–182 (HARE), arginine 237, and 254–255 (NR) contribute to the substrate site. Residues cysteine 248 and cysteine 271 are joined by a disulfide bond. Zn(2+) is bound at residue histidine 309. 310 to 311 (SY) contacts substrate. Glutamate 385 functions as the Proton donor/acceptor in the catalytic mechanism.

It belongs to the peptidase M14 family. Zn(2+) serves as cofactor.

It is found in the secreted. Extracellular metalloprotease that contributes to pathogenicity. The polypeptide is Probable metallocarboxypeptidase A (MCPA) (Arthroderma benhamiae (strain ATCC MYA-4681 / CBS 112371) (Trichophyton mentagrophytes)).